The sequence spans 141 residues: Deoxyuridine 5'-triphosphate nucleotidohydrolase (141 aa).

Belongs to the dUTPase family. It depends on Mg(2+) as a cofactor.

The enzyme catalyses dUTP + H2O = dUMP + diphosphate + H(+). It functions in the pathway pyrimidine metabolism; dUMP biosynthesis; dUMP from dCTP (dUTP route): step 2/2. In terms of biological role, this enzyme is involved in nucleotide metabolism: it produces dUMP, the immediate precursor of thymidine nucleotides and it decreases the intracellular concentration of dUTP so that uracil cannot be incorporated into DNA. In Chlorella (PBCV-1), this protein is Deoxyuridine 5'-triphosphate nucleotidohydrolase.